The following is a 125-amino-acid chain: Large ribosomal subunit protein bL12 (125 aa).

It belongs to the bacterial ribosomal protein bL12 family. Homodimer. Part of the ribosomal stalk of the 50S ribosomal subunit. Forms a multimeric L10(L12)X complex, where L10 forms an elongated spine to which 2 to 4 L12 dimers bind in a sequential fashion. Binds GTP-bound translation factors.

Forms part of the ribosomal stalk which helps the ribosome interact with GTP-bound translation factors. Is thus essential for accurate translation. The protein is Large ribosomal subunit protein bL12 of Ruegeria sp. (strain TM1040) (Silicibacter sp.).